The sequence spans 536 residues: Phosphoenolpyruvate carboxykinase (ATP) (536 aa).

Arg-61, Tyr-195, and Lys-201 together coordinate substrate. Residues Lys-201, His-220, and 236-244 (GLSGTGKTT) each bind ATP. Mn(2+) contacts are provided by Lys-201 and His-220. Asp-257 contributes to the Mn(2+) binding site. Glu-285, Arg-322, and Thr-447 together coordinate ATP. Residue Arg-322 participates in substrate binding.

It belongs to the phosphoenolpyruvate carboxykinase (ATP) family. The cofactor is Mn(2+).

Its subcellular location is the cytoplasm. The enzyme catalyses oxaloacetate + ATP = phosphoenolpyruvate + ADP + CO2. The protein operates within carbohydrate biosynthesis; gluconeogenesis. Functionally, involved in the gluconeogenesis. Catalyzes the conversion of oxaloacetate (OAA) to phosphoenolpyruvate (PEP) through direct phosphoryl transfer between the nucleoside triphosphate and OAA. This is Phosphoenolpyruvate carboxykinase (ATP) from Mesorhizobium japonicum (strain LMG 29417 / CECT 9101 / MAFF 303099) (Mesorhizobium loti (strain MAFF 303099)).